The following is a 479-amino-acid chain: Catalase A (479 aa).

The active site involves histidine 63. Tyrosine 346 lines the heme pocket.

It belongs to the catalase family. Requires heme as cofactor.

It localises to the peroxisome matrix. The enzyme catalyses 2 H2O2 = O2 + 2 H2O. Functionally, catalyzes the degradation of hydrogen peroxide (H(2)O(2)) generated by peroxisomal oxidases to water and oxygen, thereby protecting cells from the toxic effects of hydrogen peroxide. The polypeptide is Catalase A (catA) (Botryotinia fuckeliana (Noble rot fungus)).